A 305-amino-acid chain; its full sequence is MSDLDKQIEQLKRCEALKESEVKALCLKAMEILVEESNVQRVDAPVTICGDIHGQFYDMKELFKVGGDCPKTNYLFLGDFVDRGFYSVETFLLLLALKVRYPDRITLIRGNHESRQITQVYGFYDECLRKYGSVNVWRYCTDIFDYLSLSALVENKIFCVHGGLSPAIMTLDQIRAIDRKQEVPHDGAMCDLLWSDPEDIVDGWGLSPRGAGFLFGGSVVTSFNHSNNIDYICRAHQLVMEGYKWMFNSQIVTVWSAPNYCYRCGNVAAILELDENLNKEFRVFDAAPQESRGALAKKPAPDYFL.

Mn(2+) is bound by residues aspartate 51, histidine 53, aspartate 79, and asparagine 111. The active-site Proton donor is histidine 112. The Mn(2+) site is built by histidine 161 and histidine 236.

Belongs to the PPP phosphatase family. PP-4 (PP-X) subfamily. Mn(2+) serves as cofactor. In terms of tissue distribution, ubiquitous, mostly expressed in root mersitems, flowers, and vascular tissues.

Its subcellular location is the plastid stroma. It carries out the reaction O-phospho-L-seryl-[protein] + H2O = L-seryl-[protein] + phosphate. It catalyses the reaction O-phospho-L-threonyl-[protein] + H2O = L-threonyl-[protein] + phosphate. This Arabidopsis thaliana (Mouse-ear cress) protein is Serine/threonine-protein phosphatase PP-X isozyme 2 (PPX2).